Consider the following 63-residue polypeptide: Large ribosomal subunit protein bL28c (63 aa).

It belongs to the bacterial ribosomal protein bL28 family.

The protein resides in the plastid. The protein localises to the chloroplast. This is Large ribosomal subunit protein bL28c (rpl28) from Porphyra purpurea (Red seaweed).